We begin with the raw amino-acid sequence, 152 residues long: Putative pre-16S rRNA nuclease (152 aa).

This sequence belongs to the YqgF nuclease family.

The protein resides in the cytoplasm. Its function is as follows. Could be a nuclease involved in processing of the 5'-end of pre-16S rRNA. The polypeptide is Putative pre-16S rRNA nuclease (Nitrosococcus oceani (strain ATCC 19707 / BCRC 17464 / JCM 30415 / NCIMB 11848 / C-107)).